We begin with the raw amino-acid sequence, 512 residues long: Maturase K (512 aa).

This sequence belongs to the intron maturase 2 family. MatK subfamily.

Its subcellular location is the plastid. It is found in the chloroplast. Its function is as follows. Usually encoded in the trnK tRNA gene intron. Probably assists in splicing its own and other chloroplast group II introns. The chain is Maturase K from Daucus carota (Wild carrot).